Reading from the N-terminus, the 196-residue chain is Putative manganese efflux pump MntP (196 aa).

6 helical membrane-spanning segments follow: residues 3–23, 39–59, 67–87, 109–129, 137–157, and 172–192; these read PASL…ASIG, IGAV…ALGH, GVDH…MIWA, IWLI…VGIT, IIAA…LGTL, and ILGG…HLAG.

Belongs to the MntP (TC 9.B.29) family.

It is found in the cell inner membrane. Probably functions as a manganese efflux pump. The polypeptide is Putative manganese efflux pump MntP (Chromohalobacter salexigens (strain ATCC BAA-138 / DSM 3043 / CIP 106854 / NCIMB 13768 / 1H11)).